The chain runs to 373 residues: uncharacterized protein (373 aa).

The protein belongs to the glycosyltransferase 28 family.

This is an uncharacterized protein from Bacillus subtilis (strain 168).